The primary structure comprises 109 residues: Large ribosomal subunit protein uL22 (109 aa).

Belongs to the universal ribosomal protein uL22 family. In terms of assembly, part of the 50S ribosomal subunit.

This protein binds specifically to 23S rRNA; its binding is stimulated by other ribosomal proteins, e.g. L4, L17, and L20. It is important during the early stages of 50S assembly. It makes multiple contacts with different domains of the 23S rRNA in the assembled 50S subunit and ribosome. In terms of biological role, the globular domain of the protein is located near the polypeptide exit tunnel on the outside of the subunit, while an extended beta-hairpin is found that lines the wall of the exit tunnel in the center of the 70S ribosome. This chain is Large ribosomal subunit protein uL22, found in Ralstonia nicotianae (strain ATCC BAA-1114 / GMI1000) (Ralstonia solanacearum).